We begin with the raw amino-acid sequence, 385 residues long: Chaperone protein DnaJ (385 aa).

The J domain maps to 5–70 (DYYEVLGVAK…QKRAAYDRYG (66 aa)). A CR-type zinc finger spans residues 145–223 (GFDTEIRVPS…CDGVGRTRRN (79 aa)). Zn(2+) contacts are provided by C158, C161, C175, C178, C197, C200, C211, and C214. CXXCXGXG motif repeat units lie at residues 158 to 165 (CDTCHGSG), 175 to 182 (CRTCGGSG), 197 to 204 (CPTCHGTG), and 211 to 218 (CPSCDGVG).

Belongs to the DnaJ family. Homodimer. Zn(2+) serves as cofactor.

It is found in the cytoplasm. Functionally, participates actively in the response to hyperosmotic and heat shock by preventing the aggregation of stress-denatured proteins and by disaggregating proteins, also in an autonomous, DnaK-independent fashion. Unfolded proteins bind initially to DnaJ; upon interaction with the DnaJ-bound protein, DnaK hydrolyzes its bound ATP, resulting in the formation of a stable complex. GrpE releases ADP from DnaK; ATP binding to DnaK triggers the release of the substrate protein, thus completing the reaction cycle. Several rounds of ATP-dependent interactions between DnaJ, DnaK and GrpE are required for fully efficient folding. Also involved, together with DnaK and GrpE, in the DNA replication of plasmids through activation of initiation proteins. This is Chaperone protein DnaJ from Bordetella pertussis (strain Tohama I / ATCC BAA-589 / NCTC 13251).